The chain runs to 353 residues: S-adenosylmethionine:tRNA ribosyltransferase-isomerase (353 aa).

This sequence belongs to the QueA family. In terms of assembly, monomer.

The protein resides in the cytoplasm. The catalysed reaction is 7-aminomethyl-7-carbaguanosine(34) in tRNA + S-adenosyl-L-methionine = epoxyqueuosine(34) in tRNA + adenine + L-methionine + 2 H(+). The protein operates within tRNA modification; tRNA-queuosine biosynthesis. Its function is as follows. Transfers and isomerizes the ribose moiety from AdoMet to the 7-aminomethyl group of 7-deazaguanine (preQ1-tRNA) to give epoxyqueuosine (oQ-tRNA). In Blochmanniella floridana, this protein is S-adenosylmethionine:tRNA ribosyltransferase-isomerase.